Here is a 557-residue protein sequence, read N- to C-terminus: ABC1 family protein MCP2 homolog (557 aa).

The N-terminal 33 residues, Met-1 to Glu-33, are a transit peptide targeting the mitochondrion. Residues His-34–Lys-39 lie on the Mitochondrial matrix side of the membrane. Residues Pro-40–Val-56 form a helical membrane-spanning segment. Over Asp-57 to Leu-557 the chain is Mitochondrial intermembrane.

This sequence belongs to the protein kinase superfamily. ADCK protein kinase family.

Its subcellular location is the mitochondrion inner membrane. In terms of biological role, involved in mitochondrial lipid homeostasis. This Schizosaccharomyces pombe (strain 972 / ATCC 24843) (Fission yeast) protein is ABC1 family protein MCP2 homolog.